The sequence spans 314 residues: Small ribosomal subunit biogenesis GTPase RsgA (314 aa).

Residues 1 to 21 (MKRAPTKQPAKPAARGGERAQ) are disordered. The 162-residue stretch at 85-246 (SDQFKSKLFA…LIDSPGFQEF (162 aa)) folds into the CP-type G domain. GTP contacts are provided by residues 134-137 (NKID) and 188-196 (GQSGMGKST). Zn(2+) contacts are provided by Cys-270, Cys-275, His-277, and Cys-283.

This sequence belongs to the TRAFAC class YlqF/YawG GTPase family. RsgA subfamily. In terms of assembly, monomer. Associates with 30S ribosomal subunit, binds 16S rRNA. Zn(2+) is required as a cofactor.

It localises to the cytoplasm. One of several proteins that assist in the late maturation steps of the functional core of the 30S ribosomal subunit. Helps release RbfA from mature subunits. May play a role in the assembly of ribosomal proteins into the subunit. Circularly permuted GTPase that catalyzes slow GTP hydrolysis, GTPase activity is stimulated by the 30S ribosomal subunit. This is Small ribosomal subunit biogenesis GTPase RsgA from Burkholderia pseudomallei (strain 1106a).